Consider the following 74-residue polypeptide: MEIKYLLTVFLVLLIVSDHCQAFLSSLIPSAISGLISAFKGRRKRDLNGQIDHFKNFRKRDAELEELLSKLPIY.

The signal sequence occupies residues 1 to 22; sequence MEIKYLLTVFLVLLIVSDHCQA. Lysine 40 carries the post-translational modification Lysine amide. Residues 46 to 74 constitute a propeptide that is removed on maturation; that stretch reads DLNGQIDHFKNFRKRDAELEELLSKLPIY.

This sequence belongs to the non-disulfide-bridged peptide (NDBP) superfamily. Short antimicrobial peptide (group 4) family.

The protein localises to the secreted. It localises to the target cell membrane. Functionally, antibacterial peptide. This peptide gene is up-regulated at the transcriptional level after the venom gland is challenged by Gram-positive bacteria. The protein is Peptide BmKb2 of Olivierus martensii (Manchurian scorpion).